Reading from the N-terminus, the 327-residue chain is Aspartate--ammonia ligase (327 aa).

It belongs to the class-II aminoacyl-tRNA synthetase family. AsnA subfamily.

It localises to the cytoplasm. The enzyme catalyses L-aspartate + NH4(+) + ATP = L-asparagine + AMP + diphosphate + H(+). The protein operates within amino-acid biosynthesis; L-asparagine biosynthesis; L-asparagine from L-aspartate (ammonia route): step 1/1. This is Aspartate--ammonia ligase from Bacillus anthracis (strain A0248).